Consider the following 699-residue polypeptide: Elongation factor G (699 aa).

The tr-type G domain maps to 8-290 (NRYRNIGICA…AVIEFLPAPD (283 aa)). Residues 17–24 (AHVDAGKT), 88–92 (DTPGH), and 142–145 (NKMD) contribute to the GTP site.

It belongs to the TRAFAC class translation factor GTPase superfamily. Classic translation factor GTPase family. EF-G/EF-2 subfamily.

It localises to the cytoplasm. In terms of biological role, catalyzes the GTP-dependent ribosomal translocation step during translation elongation. During this step, the ribosome changes from the pre-translocational (PRE) to the post-translocational (POST) state as the newly formed A-site-bound peptidyl-tRNA and P-site-bound deacylated tRNA move to the P and E sites, respectively. Catalyzes the coordinated movement of the two tRNA molecules, the mRNA and conformational changes in the ribosome. The protein is Elongation factor G of Alcanivorax borkumensis (strain ATCC 700651 / DSM 11573 / NCIMB 13689 / SK2).